The primary structure comprises 593 residues: ESX-1 secretion system protein EccCb1 (593 aa).

2 FtsK domains span residues 66–260 (RQEV…NETQ) and 350–546 (QVPL…EKND). ATP-binding positions include 85 to 92 (GAPQTGKS) and 377 to 384 (GAPKSGKT).

In terms of assembly, part of the ESX-1 / type VII secretion system (T7SS), which is composed of cytosolic and membrane components. The ESX-1 membrane complex is composed of EccB1, EccCa1, EccCb1, EccD1 and EccE1.

Its subcellular location is the cytoplasm. Functionally, part of the ESX-1 / type VII specialized secretion system (T7SS), which exports several proteins including EsxA and EsxB. Plays a role in DNA conjugation, in both donor and recipient strains. This is ESX-1 secretion system protein EccCb1 from Mycolicibacterium smegmatis (strain ATCC 700084 / mc(2)155) (Mycobacterium smegmatis).